Reading from the N-terminus, the 89-residue chain is Small ribosomal subunit protein bS18 (89 aa).

This sequence belongs to the bacterial ribosomal protein bS18 family. As to quaternary structure, part of the 30S ribosomal subunit. Forms a tight heterodimer with protein bS6.

Binds as a heterodimer with protein bS6 to the central domain of the 16S rRNA, where it helps stabilize the platform of the 30S subunit. This is Small ribosomal subunit protein bS18 from Bdellovibrio bacteriovorus (strain ATCC 15356 / DSM 50701 / NCIMB 9529 / HD100).